The primary structure comprises 633 residues: Cyclic GMP-AMP synthase-like receptor 1 (633 aa).

3 disordered regions span residues 23–80 (KVHG…HPHT), 107–214 (FKGP…TDPF), and 250–276 (REDDKSDQEKRDSWKRREGSVDDRPSS). Basic and acidic residues predominate over residues 29–67 (KQHESAHPPRERHTERTATKRSDETKTASRPTASHEGKT). Residues 68–80 (HTTNPRGQVHPHT) show a composition bias toward polar residues. 3 stretches are compositionally biased toward basic and acidic residues: residues 125-143 (RKPETPKKPHSATKDDHRT), 176-194 (RKPDTPKKPHSATKDDHRT), and 250-274 (REDDKSDQEKRDSWKRREGSVDDRP). Positions 353, 355, and 455 each coordinate Mg(2+).

It belongs to the mab-21 family. Requires Mg(2+) as cofactor. Mn(2+) serves as cofactor.

The enzyme catalyses UTP + ATP = 2',3'-cUAMP + 2 diphosphate. In terms of biological role, nucleotidyltransferase that catalyzes the formation of cyclic UMP-AMP (2',3'-cUAMP) from ATP and UTP and plays a key role in innate immunity. Acts as a key sensor of double-stranded DNA (dsDNA), the presence of dsDNA in the cytoplasm being a danger signal that triggers the immune responses. Directly binds dsDNA, activating the nucleotidyltransferase activity, leading to synthesis of 2',3'-cUAMP, a second messenger that binds to and activates Sting, thereby triggering the immune response via activation of the NF-kappa-B transcription factor. In Crassostrea virginica (Eastern oyster), this protein is Cyclic GMP-AMP synthase-like receptor 1.